Consider the following 569-residue polypeptide: Urease subunit alpha (569 aa).

The Urease domain maps to 131–569; that stretch reads GGIDAHIHFI…VPMAQRYFLF (439 aa). Ni(2+)-binding residues include His136, His138, and Lys219. Position 219 is an N6-carboxylysine (Lys219). His221 provides a ligand contact to substrate. Residues His248 and His274 each contribute to the Ni(2+) site. His322 (proton donor) is an active-site residue. A Ni(2+)-binding site is contributed by Asp362.

The protein belongs to the metallo-dependent hydrolases superfamily. Urease alpha subunit family. As to quaternary structure, heterotrimer of UreA (gamma), UreB (beta) and UreC (alpha) subunits. Three heterotrimers associate to form the active enzyme. Ni cation serves as cofactor. Carboxylation allows a single lysine to coordinate two nickel ions.

The protein localises to the cytoplasm. The enzyme catalyses urea + 2 H2O + H(+) = hydrogencarbonate + 2 NH4(+). The protein operates within nitrogen metabolism; urea degradation; CO(2) and NH(3) from urea (urease route): step 1/1. This chain is Urease subunit alpha, found in Bacillus sp. (strain TB-90).